The sequence spans 529 residues: MAVHRALAAYAISLYVLLPRKSGATDKGAIKFETWEPLCLLTQDFGNLYNRAHKLNLDIDTYVTAAQADQLRLQILLSRASSKIEAAAAAAATAAIAADLAGKAKHVASCKLAATTLTATTGYLHGRIAEFLEVMTAHRGTTNKYGCLSKSRSDNSNSITDSVANLKDKCKLTVQQISPDNKATEQITKAGFTKLTATGGLTSSDLGGSGQAVCMILSTTASEVVNNGNLDEPVPYAGGYLRRKHDLTSDGNDNLATITDSASAPATRAKTDPYLQIWRAFKNLEDCESTFTSGYSRPSPETLKAADETKTAIKNYVVQKEGKYDQATDKEDDYKNLDKIFKDGKDFYPQKLWDAMDKKDLLKDATQTNEIKKLADITDRSELNKVLLYYTRQKEQTLTKELKEAQEKATQANQNDAAAKAAEDSCNKLVGGEKCNADKKCSYETETDGTKKCKFNATKAEKSGAPVTQAQTVGETEATPEKCKGKDAKTCGTTQGCKWEGETCKDSSILVTKKFALTVVSAAFVALLF.

The N-terminal stretch at 1–24 (MAVHRALAAYAISLYVLLPRKSGA) is a signal peptide. 2 disulfides stabilise this stretch: Cys39–Cys170 and Cys147–Cys214. N-linked (GlcNAc...) (high mannose) asparagine glycosylation is present at Asn456. Asp506 carries GPI-anchor amidated aspartate lipidation. The propeptide at 507-529 (SSILVTKKFALTVVSAAFVALLF) is removed in mature form.

Post-translationally, N-glycosylated; glycan is composed of 6 to 9 mannose residues.

Its subcellular location is the cell membrane. Functionally, VSG forms a coat on the surface of the parasite. The trypanosome evades the immune response of the host by expressing a series of antigenically distinct VSGs from an estimated 1000 VSG genes. This Trypanosoma brucei brucei protein is Variant surface glycoprotein MITAT 1.6.